We begin with the raw amino-acid sequence, 182 residues long: Peptidyl-tRNA hydrolase (182 aa).

Residue Y14 coordinates tRNA. Residue H19 is the Proton acceptor of the active site. F64, N66, and N112 together coordinate tRNA.

It belongs to the PTH family. Monomer.

It is found in the cytoplasm. The enzyme catalyses an N-acyl-L-alpha-aminoacyl-tRNA + H2O = an N-acyl-L-amino acid + a tRNA + H(+). In terms of biological role, hydrolyzes ribosome-free peptidyl-tRNAs (with 1 or more amino acids incorporated), which drop off the ribosome during protein synthesis, or as a result of ribosome stalling. Catalyzes the release of premature peptidyl moieties from peptidyl-tRNA molecules trapped in stalled 50S ribosomal subunits, and thus maintains levels of free tRNAs and 50S ribosomes. This Wolbachia sp. subsp. Brugia malayi (strain TRS) protein is Peptidyl-tRNA hydrolase.